Reading from the N-terminus, the 243-residue chain is uncharacterized protein (243 aa).

The region spanning 26–204 (RVGLVLDITG…ISDDELYDAL (179 aa)) is the VWFA domain. Residues 222-243 (REQEPPAEKPKKKGFFSRLFSK) form a disordered region. A compositionally biased stretch (basic residues) spans 231-243 (PKKKGFFSRLFSK).

This is an uncharacterized protein from Bacillus subtilis (strain 168).